The chain runs to 284 residues: Efem/EfeO family lipoprotein (284 aa).

The signal sequence occupies residues 1–17; that stretch reads MKKLTTLLLASTLLIAA. Cysteine 18 is lipidated: N-palmitoyl cysteine. The S-diacylglycerol cysteine moiety is linked to residue cysteine 18.

It belongs to the EfeM/EfeO family.

Its subcellular location is the cell membrane. The polypeptide is Efem/EfeO family lipoprotein (Staphylococcus aureus (strain NCTC 8325 / PS 47)).